The primary structure comprises 691 residues: MIDRYKHQQLRIGLVSPEQISAWATKILPNGEIVGEVTKPSILHYKTNKAEKGGLFCERIFGPQKSGICACGNYRVIGDEKEDPKFCEQCGVEFVDSRIRRYQMGYIKLACPVTHVWYLKRLPSYIANLLDKPLKELEGLVYRDFSFARPITKKPTFLRLRGLFEYEIKSWKYSIPLFFTIQGFDTFRNREISTGAGAIREQLVDLDLRIILDNSLVEWKELGEEGPTGNEWEDQKVRRRRGFLVRRMELAKHFIRTNIEPEWMVLCLLPVLPPDLRPVIQIAEGKVMSSDITKLYQRVIYRNKILTDLLTRSVSTPGDLVTSQEKLVQEAVDALLDNGTRGQPMRDGQNKVYKSLSDIIEGKEGRFRQTLLGKRVDYSGRSVIVVGPSLSLYRCGLPREIAIELFQTFVIRGLIRQDPASNIKVAKSQIREKEPIVWEILQEVMQGHPVLLNRAPTLHRLGIQAFQPVLVEGRAICLHPLVCKGFNADFDGDQMAVHVPLSLEAQAEARLLMFSHMNLLSPAIGDPISIPTQDMLVGLYVLTSGNRRGICVNRYNPWNHRNYENQRSKNNNYRYTKEPLFSNSYDAIGAYRQKRIKLDSPLWLRWPLDQRVIASRESPIEVHYESLGTYYEIYGHYLIVRSIKKEILFLYIRTTVGHISLYREIEEAIEGFSQACSSSYGTYTKLSNSRI.

Residues Cys-69, Cys-71, Cys-87, and Cys-90 each contribute to the Zn(2+) site. The Mg(2+) site is built by Asp-489, Asp-491, and Asp-493.

This sequence belongs to the RNA polymerase beta' chain family. RpoC1 subfamily. As to quaternary structure, in plastids the minimal PEP RNA polymerase catalytic core is composed of four subunits: alpha, beta, beta', and beta''. When a (nuclear-encoded) sigma factor is associated with the core the holoenzyme is formed, which can initiate transcription. It depends on Mg(2+) as a cofactor. The cofactor is Zn(2+).

It localises to the plastid. The protein resides in the chloroplast. It catalyses the reaction RNA(n) + a ribonucleoside 5'-triphosphate = RNA(n+1) + diphosphate. Its function is as follows. DNA-dependent RNA polymerase catalyzes the transcription of DNA into RNA using the four ribonucleoside triphosphates as substrates. The chain is DNA-directed RNA polymerase subunit beta' from Jasminum nudiflorum (Winter jasmine).